The chain runs to 154 residues: 3-hydroxyacyl-[acyl-carrier-protein] dehydratase FabZ (154 aa).

The active site involves histidine 58.

It belongs to the thioester dehydratase family. FabZ subfamily.

It localises to the cytoplasm. It catalyses the reaction a (3R)-hydroxyacyl-[ACP] = a (2E)-enoyl-[ACP] + H2O. Its function is as follows. Involved in unsaturated fatty acids biosynthesis. Catalyzes the dehydration of short chain beta-hydroxyacyl-ACPs and long chain saturated and unsaturated beta-hydroxyacyl-ACPs. The sequence is that of 3-hydroxyacyl-[acyl-carrier-protein] dehydratase FabZ from Protochlamydia amoebophila (strain UWE25).